The sequence spans 138 residues: Ribosome-binding factor A (138 aa).

It belongs to the RbfA family. Monomer. Binds 30S ribosomal subunits, but not 50S ribosomal subunits or 70S ribosomes.

Its subcellular location is the cytoplasm. Functionally, one of several proteins that assist in the late maturation steps of the functional core of the 30S ribosomal subunit. Associates with free 30S ribosomal subunits (but not with 30S subunits that are part of 70S ribosomes or polysomes). Required for efficient processing of 16S rRNA. May interact with the 5'-terminal helix region of 16S rRNA. The chain is Ribosome-binding factor A from Pseudoalteromonas atlantica (strain T6c / ATCC BAA-1087).